A 255-amino-acid polypeptide reads, in one-letter code: Thrombin-like enzyme batroxobin (255 aa).

An N-terminal signal peptide occupies residues M1–A18. Positions Q19–L24 are excised as a propeptide. The Peptidase S1 domain maps to V25–A247. 6 disulfides stabilise this stretch: C31/C163, C50/C66, C98/C254, C142/C208, C174/C187, and C198/C223. Catalysis depends on charge relay system residues H65 and D110. N170 carries an N-linked (GlcNAc...) asparagine glycan. Residue S202 is the Charge relay system of the active site. N-linked (GlcNAc...) asparagine glycosylation occurs at N249.

Belongs to the peptidase S1 family. Snake venom subfamily. Monomer. In terms of tissue distribution, expressed by the venom gland.

It is found in the secreted. It catalyses the reaction Selective cleavage of Arg-|-Xaa bond in fibrinogen, to form fibrin, and release fibrinopeptide A. The specificity of further degradation of fibrinogen varies with species origin of the enzyme.. Its function is as follows. Thrombin-like snake venom serine protease. Cleaves Arg-Gly bonds in fibrinogen alpha chains (FGA). This Bothrops atrox (Barba amarilla) protein is Thrombin-like enzyme batroxobin.